Reading from the N-terminus, the 336-residue chain is tRNA N6-adenosine threonylcarbamoyltransferase (336 aa).

Fe cation-binding residues include histidine 111 and histidine 115. Substrate contacts are provided by residues 134 to 138, aspartate 167, glycine 180, aspartate 184, and asparagine 272; that span reads VVSGG. Residue aspartate 300 participates in Fe cation binding.

Belongs to the KAE1 / TsaD family. The cofactor is Fe(2+).

The protein localises to the cytoplasm. It carries out the reaction L-threonylcarbamoyladenylate + adenosine(37) in tRNA = N(6)-L-threonylcarbamoyladenosine(37) in tRNA + AMP + H(+). In terms of biological role, required for the formation of a threonylcarbamoyl group on adenosine at position 37 (t(6)A37) in tRNAs that read codons beginning with adenine. Is involved in the transfer of the threonylcarbamoyl moiety of threonylcarbamoyl-AMP (TC-AMP) to the N6 group of A37, together with TsaE and TsaB. TsaD likely plays a direct catalytic role in this reaction. This Caldicellulosiruptor saccharolyticus (strain ATCC 43494 / DSM 8903 / Tp8T 6331) protein is tRNA N6-adenosine threonylcarbamoyltransferase.